Consider the following 122-residue polypeptide: Large ribosomal subunit protein uL14 (122 aa).

Belongs to the universal ribosomal protein uL14 family. As to quaternary structure, part of the 50S ribosomal subunit. Forms a cluster with proteins L3 and L19. In the 70S ribosome, L14 and L19 interact and together make contacts with the 16S rRNA in bridges B5 and B8.

Its function is as follows. Binds to 23S rRNA. Forms part of two intersubunit bridges in the 70S ribosome. The polypeptide is Large ribosomal subunit protein uL14 (Halothermothrix orenii (strain H 168 / OCM 544 / DSM 9562)).